A 261-amino-acid polypeptide reads, in one-letter code: Cytochrome c oxidase subunit 3 (261 aa).

Residues 1 to 15 (MTHQSHAYHMVKPSP) lie on the Mitochondrial matrix side of the membrane. The helical transmembrane segment at 16 to 34 (WPLTGALSALLMTSGLAMW) threads the bilayer. Over 35 to 40 (FHFHSM) the chain is Mitochondrial intermembrane. Residues 41 to 66 (TLLMLGLLTNTLTMYQWWRDVTREST) form a helical membrane-spanning segment. Topologically, residues 67-72 (YQGHHT) are mitochondrial matrix. The chain crosses the membrane as a helical span at residues 73-105 (PPVQKGLRYGMILFITSEVFFFAGFFWAFYHSS). Topologically, residues 106-128 (LAPTPQLGGHWPPTGITPLNPLE) are mitochondrial intermembrane. Residues 129-152 (VPLLNTSVLLASGVSITWAHHSLM) traverse the membrane as a helical segment. The Mitochondrial matrix portion of the chain corresponds to 153–155 (ENN). The chain crosses the membrane as a helical span at residues 156-183 (RNQMIQALLITILLGLYFTLLQASEYFE). At 184–190 (SPFTISD) the chain is on the mitochondrial intermembrane side. Residues 191-223 (GIYGSTFFVATGFHGLHVIIGSTFLTICFIRQL) form a helical membrane-spanning segment. Over 224–232 (MFHFTSKHH) the chain is Mitochondrial matrix. A helical membrane pass occupies residues 233-256 (FGFEAAAWYWHFVDVVWLFLYVSI). Topologically, residues 257-261 (YWWGS) are mitochondrial intermembrane.

Belongs to the cytochrome c oxidase subunit 3 family. As to quaternary structure, component of the cytochrome c oxidase (complex IV, CIV), a multisubunit enzyme composed of 14 subunits. The complex is composed of a catalytic core of 3 subunits MT-CO1, MT-CO2 and MT-CO3, encoded in the mitochondrial DNA, and 11 supernumerary subunits COX4I1 (or COX4I2), COX5A, COX5B, COX6A1 (or COX6A2), COX6B1 (or COX6B2), COX6C, COX7A2 (or COX7A1), COX7B, COX7C, COX8A and NDUFA4, which are encoded in the nuclear genome. The complex exists as a monomer or a dimer and forms supercomplexes (SCs) in the inner mitochondrial membrane with NADH-ubiquinone oxidoreductase (complex I, CI) and ubiquinol-cytochrome c oxidoreductase (cytochrome b-c1 complex, complex III, CIII), resulting in different assemblies (supercomplex SCI(1)III(2)IV(1) and megacomplex MCI(2)III(2)IV(2)).

It is found in the mitochondrion inner membrane. It catalyses the reaction 4 Fe(II)-[cytochrome c] + O2 + 8 H(+)(in) = 4 Fe(III)-[cytochrome c] + 2 H2O + 4 H(+)(out). In terms of biological role, component of the cytochrome c oxidase, the last enzyme in the mitochondrial electron transport chain which drives oxidative phosphorylation. The respiratory chain contains 3 multisubunit complexes succinate dehydrogenase (complex II, CII), ubiquinol-cytochrome c oxidoreductase (cytochrome b-c1 complex, complex III, CIII) and cytochrome c oxidase (complex IV, CIV), that cooperate to transfer electrons derived from NADH and succinate to molecular oxygen, creating an electrochemical gradient over the inner membrane that drives transmembrane transport and the ATP synthase. Cytochrome c oxidase is the component of the respiratory chain that catalyzes the reduction of oxygen to water. Electrons originating from reduced cytochrome c in the intermembrane space (IMS) are transferred via the dinuclear copper A center (CU(A)) of subunit 2 and heme A of subunit 1 to the active site in subunit 1, a binuclear center (BNC) formed by heme A3 and copper B (CU(B)). The BNC reduces molecular oxygen to 2 water molecules using 4 electrons from cytochrome c in the IMS and 4 protons from the mitochondrial matrix. The protein is Cytochrome c oxidase subunit 3 (MT-CO3) of Homo sapiens (Human).